The primary structure comprises 246 residues: Ly6/PLAUR domain-containing protein 4 (246 aa).

The first 26 residues, 1–26 (MGPQHLRLVQLFCLLGAISTLPRAGA), serve as a signal peptide directing secretion. A glycan (N-linked (GlcNAc...) asparagine) is linked at N117. The 82-residue stretch at 142–223 (CPTCVGEHMK…LNILEKSQIV (82 aa)) folds into the UPAR/Ly6 domain. A225 carries GPI-anchor amidated alanine lipidation. Positions 226 to 246 (ASSRQDPAWGVVLGLLFAFRD) are cleaved as a propeptide — removed in mature form.

Its subcellular location is the cell membrane. In Homo sapiens (Human), this protein is Ly6/PLAUR domain-containing protein 4 (LYPD4).